Consider the following 235-residue polypeptide: Large ribosomal subunit protein uL1 (235 aa).

The protein belongs to the universal ribosomal protein uL1 family. Part of the 50S ribosomal subunit.

Functionally, binds directly to 23S rRNA. The L1 stalk is quite mobile in the ribosome, and is involved in E site tRNA release. Its function is as follows. Protein L1 is also a translational repressor protein, it controls the translation of the L11 operon by binding to its mRNA. The polypeptide is Large ribosomal subunit protein uL1 (Mycobacterium tuberculosis (strain ATCC 25177 / H37Ra)).